The chain runs to 315 residues: Olfactory receptor 5A1 (315 aa).

Residues 1-28 are Extracellular-facing; sequence MSITKAWNSSSVTMFILLGFTDHPELQA. An N-linked (GlcNAc...) asparagine glycan is attached at N8. A helical membrane pass occupies residues 29-52; it reads LLFVTFLGIYLTTLAWNLALIFLI. Residues 53 to 60 lie on the Cytoplasmic side of the membrane; the sequence is RGDTHLHT. A helical transmembrane segment spans residues 61 to 82; the sequence is PMYFFLSNLSFIDICYSSAVAP. The Extracellular segment spans residues 83–103; that stretch reads NMLTDFFWEQKTISFVGCAAQ. The cysteines at positions 100 and 192 are disulfide-linked. The helical transmembrane segment at 104-123 threads the bilayer; the sequence is FFFFVGMGLSECLLLTAMAY. Topologically, residues 124 to 142 are cytoplasmic; the sequence is DRYAAISSPLLYPTIMTQG. Residues 143–161 traverse the membrane as a helical segment; the sequence is LCTRMVVGAYVGGFLSSLI. The Extracellular portion of the chain corresponds to 162–198; sequence QASSIFRLHFCGPNIINHFFCDLPPVLALSCSDTFLS. Residues 199–222 form a helical membrane-spanning segment; that stretch reads QVVNFLVVVTVGGTSFLQLLISYG. Over 223 to 239 the chain is Cytoplasmic; that stretch reads YIVSAVLKIPSAEGRWK. Residues 240 to 262 form a helical membrane-spanning segment; sequence ACNTCASHLMVVTLLFGTALFVY. Over 263-275 the chain is Extracellular; it reads LRPSSSYLLGRDK. Residues 276 to 295 form a helical membrane-spanning segment; sequence VVSVFYSLVIPMLNPLIYSL. The Cytoplasmic segment spans residues 296-315; the sequence is RNKEIKDALWKVLERKKVFS.

The protein belongs to the G-protein coupled receptor 1 family.

The protein localises to the cell membrane. Functionally, odorant receptor. This is Olfactory receptor 5A1 (OR5A1) from Homo sapiens (Human).